An 888-amino-acid chain; its full sequence is Valine--tRNA ligase (888 aa).

Residues 43–53 (PNVTGTLHLGH) carry the 'HIGH' region motif. Positions 538–542 (KMSKS) match the 'KMSKS' region motif. Lysine 541 is a binding site for ATP. The stretch at 821-888 (LIDLDAERAR…RLKAALGRLA (68 aa)) forms a coiled coil.

The protein belongs to the class-I aminoacyl-tRNA synthetase family. ValS type 1 subfamily. In terms of assembly, monomer.

It is found in the cytoplasm. The enzyme catalyses tRNA(Val) + L-valine + ATP = L-valyl-tRNA(Val) + AMP + diphosphate. Catalyzes the attachment of valine to tRNA(Val). As ValRS can inadvertently accommodate and process structurally similar amino acids such as threonine, to avoid such errors, it has a 'posttransfer' editing activity that hydrolyzes mischarged Thr-tRNA(Val) in a tRNA-dependent manner. The polypeptide is Valine--tRNA ligase (Gluconobacter oxydans (strain 621H) (Gluconobacter suboxydans)).